A 40-amino-acid chain; its full sequence is ATCDLLSGTGIKHSACAAHCLLRGNRGGYCNGRAICVCRN.

Disulfide bonds link Cys3/Cys30, Cys16/Cys36, and Cys20/Cys38.

This sequence belongs to the invertebrate defensin family. Type 1 subfamily. Post-translationally, the disulfide bonds are essential for antimicrobial activity. In terms of tissue distribution, larval fat body, hemolymph and salivary glands (at protein level).

The protein resides in the secreted. Its function is as follows. Shows strong antibacterial activity against the Gram-positive bacterium M.luteus. Also shows antibacterial activity against the Gram-positive bacteria E.fecalis, S.aureus, S.carnosus, S.pneumoniae and S.pyogenes and against a number of methicillin-resistant S.aureus and glycopeptide-intermediate S.aureus isolates. Does not show antibacterial activity against Gram-negative bacteria or antifungal activity against C.utilis. Shows slight antifungal activity against C.albicans. This chain is Lucifensin, found in Lucilia cuprina (Green bottle fly).